A 461-amino-acid polypeptide reads, in one-letter code: ATP synthase subunit beta 2 (461 aa).

151-158 (GGAGVGKT) lines the ATP pocket.

The protein belongs to the ATPase alpha/beta chains family. F-type ATPases have 2 components, CF(1) - the catalytic core - and CF(0) - the membrane proton channel. CF(1) has five subunits: alpha(3), beta(3), gamma(1), delta(1), epsilon(1). CF(0) has three main subunits: a(1), b(2) and c(9-12). The alpha and beta chains form an alternating ring which encloses part of the gamma chain. CF(1) is attached to CF(0) by a central stalk formed by the gamma and epsilon chains, while a peripheral stalk is formed by the delta and b chains.

It localises to the cell inner membrane. It catalyses the reaction ATP + H2O + 4 H(+)(in) = ADP + phosphate + 5 H(+)(out). Its function is as follows. Produces ATP from ADP in the presence of a proton gradient across the membrane. The catalytic sites are hosted primarily by the beta subunits. This is ATP synthase subunit beta 2 from Pseudoalteromonas atlantica (strain T6c / ATCC BAA-1087).